The chain runs to 171 residues: uncharacterized protein (171 aa).

Disordered regions lie at residues 68-112 (NKNN…DQPY) and 152-171 (LPEK…SIKN). A compositionally biased stretch (acidic residues) spans 161 to 171 (DDEDDMFSIKN).

This sequence belongs to the asfivirus H171R family.

The protein resides in the virion. This is an uncharacterized protein from African swine fever virus (strain Badajoz 1971 Vero-adapted) (Ba71V).